The primary structure comprises 288 residues: DNA repair protein RecO (288 aa).

It belongs to the RecO family.

Its function is as follows. Involved in DNA repair and RecF pathway recombination. The polypeptide is DNA repair protein RecO (Trichodesmium erythraeum (strain IMS101)).